The chain runs to 811 residues: Glycerol-3-phosphate acyltransferase (811 aa).

Positions 308–313 (CHRSHM) match the HXXXXD motif motif.

Belongs to the GPAT/DAPAT family.

It localises to the cell inner membrane. The enzyme catalyses sn-glycerol 3-phosphate + an acyl-CoA = a 1-acyl-sn-glycero-3-phosphate + CoA. It functions in the pathway phospholipid metabolism; CDP-diacylglycerol biosynthesis; CDP-diacylglycerol from sn-glycerol 3-phosphate: step 1/3. The polypeptide is Glycerol-3-phosphate acyltransferase (Pseudoalteromonas atlantica (strain T6c / ATCC BAA-1087)).